A 545-amino-acid chain; its full sequence is Mediator of RNA polymerase II transcription subunit 17 (545 aa).

The segment at 148 to 168 is disordered; that stretch reads TVPPSSLQFSRSQPPESKESD. Positions 149-162 are enriched in polar residues; that stretch reads VPPSSLQFSRSQPP.

The protein belongs to the Mediator complex subunit 17 family. In terms of assembly, component of the Mediator complex. Interacts with med18, prk1 and rbp1.

The protein localises to the nucleus. Its function is as follows. Component of the Mediator complex, a coactivator involved in the regulated transcription of nearly all RNA polymerase II-dependent genes. Mediator functions as a bridge to convey information from gene-specific regulatory proteins to the basal RNA polymerase II transcription machinery. Mediator is recruited to promoters by direct interactions with regulatory proteins and serves as a scaffold for the assembly of a functional preinitiation complex with RNA polymerase II and the general transcription factors. The protein is Mediator of RNA polymerase II transcription subunit 17 (med17) of Schizosaccharomyces pombe (strain 972 / ATCC 24843) (Fission yeast).